We begin with the raw amino-acid sequence, 719 residues long: Polyribonucleotide nucleotidyltransferase (719 aa).

The Mg(2+) site is built by aspartate 491 and aspartate 497. The KH domain occupies 558–617 (PRMLTIKINPEKIRDVIGKGGATIRALTEETGTQIDISDDGTIVIASVDETQAKEAQRRI). Residues 627 to 695 (GQIYDGSVLR…DKGRLRLSIK (69 aa)) enclose the S1 motif domain.

It belongs to the polyribonucleotide nucleotidyltransferase family. Mg(2+) serves as cofactor.

Its subcellular location is the cytoplasm. It catalyses the reaction RNA(n+1) + phosphate = RNA(n) + a ribonucleoside 5'-diphosphate. Involved in mRNA degradation. Catalyzes the phosphorolysis of single-stranded polyribonucleotides processively in the 3'- to 5'-direction. The chain is Polyribonucleotide nucleotidyltransferase from Bordetella parapertussis (strain 12822 / ATCC BAA-587 / NCTC 13253).